Reading from the N-terminus, the 876-residue chain is Valine--tRNA ligase (876 aa).

Positions 44–54 (PNVTGKLHLGH) match the 'HIGH' region motif. The 'KMSKS' region motif lies at 520-524 (KMSKS). Lys-523 is an ATP binding site. The stretch at 806–876 (EGLIDMDKEI…VKLRINQLKA (71 aa)) forms a coiled coil.

The protein belongs to the class-I aminoacyl-tRNA synthetase family. ValS type 1 subfamily. Monomer.

The protein localises to the cytoplasm. It carries out the reaction tRNA(Val) + L-valine + ATP = L-valyl-tRNA(Val) + AMP + diphosphate. In terms of biological role, catalyzes the attachment of valine to tRNA(Val). As ValRS can inadvertently accommodate and process structurally similar amino acids such as threonine, to avoid such errors, it has a 'posttransfer' editing activity that hydrolyzes mischarged Thr-tRNA(Val) in a tRNA-dependent manner. This chain is Valine--tRNA ligase, found in Staphylococcus saprophyticus subsp. saprophyticus (strain ATCC 15305 / DSM 20229 / NCIMB 8711 / NCTC 7292 / S-41).